Here is an 88-residue protein sequence, read N- to C-terminus: Small ribosomal subunit protein bS20 (88 aa).

The protein belongs to the bacterial ribosomal protein bS20 family.

Binds directly to 16S ribosomal RNA. The sequence is that of Small ribosomal subunit protein bS20 from Clostridium botulinum (strain ATCC 19397 / Type A).